The sequence spans 469 residues: Glutamate--tRNA ligase (469 aa).

The 'HIGH' region signature appears at 11–21 (PSPTGFIHLGN). Positions 243 to 247 (KMSKR) match the 'KMSKS' region motif. Residue lysine 246 coordinates ATP.

It belongs to the class-I aminoacyl-tRNA synthetase family. Glutamate--tRNA ligase type 1 subfamily. As to quaternary structure, monomer.

The protein resides in the cytoplasm. It carries out the reaction tRNA(Glu) + L-glutamate + ATP = L-glutamyl-tRNA(Glu) + AMP + diphosphate. In terms of biological role, catalyzes the attachment of glutamate to tRNA(Glu) in a two-step reaction: glutamate is first activated by ATP to form Glu-AMP and then transferred to the acceptor end of tRNA(Glu). The polypeptide is Glutamate--tRNA ligase (Burkholderia lata (strain ATCC 17760 / DSM 23089 / LMG 22485 / NCIMB 9086 / R18194 / 383)).